Here is a 538-residue protein sequence, read N- to C-terminus: Bifunctional purine biosynthesis protein PurH (538 aa).

Residues 6-158 (KHIPAPDLHR…KNHAYVATVV (153 aa)) enclose the MGS-like domain.

Belongs to the PurH family.

It catalyses the reaction (6R)-10-formyltetrahydrofolate + 5-amino-1-(5-phospho-beta-D-ribosyl)imidazole-4-carboxamide = 5-formamido-1-(5-phospho-D-ribosyl)imidazole-4-carboxamide + (6S)-5,6,7,8-tetrahydrofolate. The catalysed reaction is IMP + H2O = 5-formamido-1-(5-phospho-D-ribosyl)imidazole-4-carboxamide. It participates in purine metabolism; IMP biosynthesis via de novo pathway; 5-formamido-1-(5-phospho-D-ribosyl)imidazole-4-carboxamide from 5-amino-1-(5-phospho-D-ribosyl)imidazole-4-carboxamide (10-formyl THF route): step 1/1. It functions in the pathway purine metabolism; IMP biosynthesis via de novo pathway; IMP from 5-formamido-1-(5-phospho-D-ribosyl)imidazole-4-carboxamide: step 1/1. The protein is Bifunctional purine biosynthesis protein PurH of Brucella melitensis biotype 2 (strain ATCC 23457).